Reading from the N-terminus, the 590-residue chain is Phosphomethylpyrimidine synthase (590 aa).

Residues Asn-197, Met-226, Tyr-255, His-291, Ser-311–Gly-313, Asp-352–Arg-355, and Glu-391 each bind substrate. His-395 lines the Zn(2+) pocket. Tyr-418 serves as a coordination point for substrate. Residue His-459 coordinates Zn(2+). [4Fe-4S] cluster contacts are provided by Cys-539, Cys-542, and Cys-547.

This sequence belongs to the ThiC family. [4Fe-4S] cluster is required as a cofactor.

It carries out the reaction 5-amino-1-(5-phospho-beta-D-ribosyl)imidazole + S-adenosyl-L-methionine = 4-amino-2-methyl-5-(phosphooxymethyl)pyrimidine + CO + 5'-deoxyadenosine + formate + L-methionine + 3 H(+). It participates in cofactor biosynthesis; thiamine diphosphate biosynthesis. Functionally, catalyzes the synthesis of the hydroxymethylpyrimidine phosphate (HMP-P) moiety of thiamine from aminoimidazole ribotide (AIR) in a radical S-adenosyl-L-methionine (SAM)-dependent reaction. This is Phosphomethylpyrimidine synthase from Bacillus velezensis (strain DSM 23117 / BGSC 10A6 / LMG 26770 / FZB42) (Bacillus amyloliquefaciens subsp. plantarum).